The chain runs to 449 residues: Cyclin-B1-5 (449 aa).

Disordered stretches follow at residues 1-37 (MATR…AGRP) and 98-147 (PARK…GGSA). Low complexity-rich tracts occupy residues 8–37 (AAAA…AGRP) and 136–147 (SEGAGSSSGGSA).

It belongs to the cyclin family. Cyclin AB subfamily.

The protein is Cyclin-B1-5 (CYCB1-5) of Oryza sativa subsp. japonica (Rice).